The primary structure comprises 413 residues: Unsaturated 3S-rhamnoglycuronyl hydrolase (413 aa).

Positions 1 to 21 (MNHTKLKLSAVALTLALGLSA) are cleaved as a signal peptide. Cys22 is lipidated: N-palmitoyl cysteine. The S-diacylglycerol cysteine moiety is linked to residue Cys22. The active-site Proton donor is the Asp203.

Belongs to the glycosyl hydrolase 105 family.

The protein resides in the cell membrane. In terms of biological role, glucuronyl hydrolase involved in ulvan degradation. Ulvan is the main polysaccharide component of the Ulvales (green seaweed) cell wall. It is composed of disaccharide building blocks comprising 3-sulfated rhamnose (Rha3S) linked to D-glucuronic acid (GlcA), L-iduronic acid (IduA), or D-xylose (Xyl). Unsaturated 3S-rhamnoglycuronyl hydrolase works together with ulvan lyases to fully degrade the ulvan polymer, catalyzing specifically the cleavage of the unsaturated 4-deoxy-L-threo-hex-4-enopyranosiduronic acid (deltaUA) of the deltaUA-oligosaccharides deltaUA-Rha3S, deltaUA-Rha3S-IduA-Rha3S and deltaUA-Rha3S-Xyl-Rha3S, the end products of the ulvan lyase reaction. This is Unsaturated 3S-rhamnoglycuronyl hydrolase from Alteromonas sp. (strain LOR).